We begin with the raw amino-acid sequence, 872 residues long: G-type lectin S-receptor-like serine/threonine-protein kinase At5g35370 (872 aa).

A signal peptide spans 1–26 (MKSTFLLLLLLLSLNLLFVFVSCASS). Residues 27 to 443 (IEFVYPNFTA…NNNRGGSSFP (417 aa)) lie on the Extracellular side of the membrane. N-linked (GlcNAc...) asparagine glycosylation is found at N33, N148, and N239. The Bulb-type lectin domain occupies 35–156 (TASNLRFVDS…LNVSLWESFD (122 aa)). Positions 283 to 322 (PMDSCQIPFVCGKLGLCNLDNASENQSCSCPDEMRMDAGK) constitute an EGF-like; atypical domain. 2 cysteine pairs are disulfide-bonded: C287–C299 and C293–C310. Residues N303, N307, N342, N379, and N389 are each glycosylated (N-linked (GlcNAc...) asparagine). In terms of domain architecture, PAN spans 338–423 (CEARNISYLE…HDLIGYVKLS (86 aa)). 2 disulfide bridges follow: C372/C394 and C376/C382. A helical membrane pass occupies residues 444–464 (VIALVLLPCSGFFLLIALGLL). Topologically, residues 465–872 (WWRRCAVMRY…IASQEVSGPR (408 aa)) are cytoplasmic. One can recognise a Protein kinase domain in the interval 515-814 (ENFKMQIGSG…GSIPLGNPRM (300 aa)). ATP-binding positions include 521–529 (IGSGGFGSV) and K543. A caM-binding region spans residues 603–620 (GNGPVLEWQERFDIALGT). D639 functions as the Proton acceptor in the catalytic mechanism. S656 carries the phosphoserine modification. The residue at position 673 (T673) is a Phosphothreonine. Phosphoserine is present on residues S716 and S859. Residues 836–872 (QNGESETMVFHRRESSNSGGSRQSASYIASQEVSGPR) are disordered. Over residues 851-861 (SNSGGSRQSAS) the composition is skewed to low complexity. Over residues 862–872 (YIASQEVSGPR) the composition is skewed to polar residues.

It belongs to the protein kinase superfamily. Ser/Thr protein kinase family.

Its subcellular location is the cell membrane. The enzyme catalyses L-seryl-[protein] + ATP = O-phospho-L-seryl-[protein] + ADP + H(+). It carries out the reaction L-threonyl-[protein] + ATP = O-phospho-L-threonyl-[protein] + ADP + H(+). This is G-type lectin S-receptor-like serine/threonine-protein kinase At5g35370 from Arabidopsis thaliana (Mouse-ear cress).